The sequence spans 2318 residues: Neurogenic locus notch homolog protein 3 (2318 aa).

Residues 1–14 (MGLGARGRRRRRRL) are compositionally biased toward basic residues. The disordered stretch occupies residues 1–20 (MGLGARGRRRRRRLMALPPP). The signal sequence occupies residues 1–39 (MGLGARGRRRRRRLMALPPPPPPMRALPLLLLLAGLGAA). EGF-like domains follow at residues 40–78 (APPC…ERCQ), 79–119 (LEDP…PDCS), and 120–157 (QPDP…QSCQ). Residues 40-1643 (APPCLDGSPC…PLEAPEQSVP (1604 aa)) lie on the Extracellular side of the membrane. Disulfide bonds link Cys-43–Cys-55, Cys-49–Cys-66, Cys-68–Cys-77, Cys-83–Cys-94, Cys-88–Cys-107, Cys-109–Cys-118, Cys-124–Cys-135, Cys-129–Cys-145, Cys-147–Cys-156, Cys-163–Cys-175, Cys-169–Cys-184, Cys-186–Cys-195, Cys-202–Cys-213, Cys-207–Cys-223, Cys-225–Cys-234, Cys-241–Cys-252, Cys-246–Cys-261, Cys-263–Cys-272, Cys-279–Cys-292, Cys-286–Cys-301, Cys-303–Cys-312, Cys-319–Cys-330, Cys-324–Cys-339, Cys-341–Cys-350, Cys-356–Cys-367, Cys-361–Cys-378, Cys-380–Cys-389, Cys-396–Cys-409, Cys-403–Cys-418, Cys-420–Cys-429, Cys-436–Cys-447, Cys-441–Cys-456, Cys-458–Cys-467, Cys-474–Cys-485, Cys-479–Cys-494, Cys-496–Cys-505, Cys-512–Cys-523, Cys-517–Cys-532, Cys-534–Cys-543, Cys-550–Cys-560, Cys-555–Cys-569, Cys-571–Cys-580, Cys-587–Cys-598, Cys-592–Cys-607, Cys-609–Cys-618, Cys-625–Cys-635, Cys-630–Cys-644, Cys-646–Cys-655, Cys-662–Cys-673, Cys-667–Cys-682, Cys-684–Cys-693, Cys-700–Cys-710, Cys-705–Cys-719, Cys-721–Cys-730, Cys-739–Cys-750, Cys-744–Cys-759, Cys-761–Cys-770, Cys-776–Cys-787, Cys-781–Cys-797, Cys-799–Cys-808, Cys-815–Cys-827, Cys-821–Cys-836, Cys-838–Cys-847, Cys-854–Cys-865, Cys-859–Cys-874, Cys-876–Cys-885, Cys-892–Cys-902, Cys-897–Cys-911, Cys-913–Cys-922, Cys-929–Cys-940, Cys-934–Cys-949, Cys-951–Cys-960, Cys-967–Cys-978, Cys-972–Cys-987, Cys-989–Cys-998, Cys-1005–Cys-1016, Cys-1010–Cys-1023, Cys-1025–Cys-1034, Cys-1041–Cys-1062, Cys-1056–Cys-1071, Cys-1073–Cys-1082, Cys-1089–Cys-1100, Cys-1094–Cys-1109, Cys-1111–Cys-1120, Cys-1127–Cys-1138, Cys-1132–Cys-1147, Cys-1149–Cys-1158, Cys-1165–Cys-1183, Cys-1177–Cys-1192, Cys-1194–Cys-1203, Cys-1210–Cys-1223, Cys-1215–Cys-1233, Cys-1235–Cys-1244, Cys-1251–Cys-1262, Cys-1256–Cys-1276, Cys-1278–Cys-1287, Cys-1294–Cys-1305, Cys-1299–Cys-1314, and Cys-1316–Cys-1325. An EGF-like 4; calcium-binding domain is found at 159-196 (DIDECRSGTTCRHGGTCLNTPGSFRCQCPLGYTGLLCE). Residues 198 to 235 (PVVPCAPSPCRNGGTCRQSSDVTYDCACLPGFEGQNCE) enclose the EGF-like 5 domain. In terms of domain architecture, EGF-like 6; calcium-binding spans 237–273 (NVDDCPGHRCLNGGTCVDGVNTYNCQCPPEWTGQFCT). One can recognise an EGF-like 7 domain in the interval 275-313 (DVDECQLQPNACHNGGTCFNLLGGHSCVCVNGWTGESCS). In terms of domain architecture, EGF-like 8; calcium-binding spans 315 to 351 (NIDDCATAVCFHGATCHDRVASFYCACPMGKTGLLCH). Residues 352 to 390 (LDDACVSNPCHEDAICDTNPVSGRAICTCPPGFTGGACD) form the EGF-like 9 domain. The 39-residue stretch at 392-430 (DVDECSIGANPCEHLGRCVNTQGSFLCQCGRGYTGPRCE) folds into the EGF-like 10; calcium-binding domain. Positions 432 to 468 (DVNECLSGPCRNQATCLDRIGQFTCICMAGFTGTYCE) constitute an EGF-like 11; calcium-binding domain. Residues 470–506 (DIDECQSSPCVNGGVCKDRVNGFSCTCPSGFSGSMCQ) enclose the EGF-like 12; calcium-binding domain. An EGF-like 13; calcium-binding domain is found at 508-544 (DVDECASTPCRNGAKCVDQPDGYECRCAEGFEGTLCE). Residues 546-581 (NVDDCSPDPCHHGRCVDGIASFSCACAPGYTGIRCE) enclose the EGF-like 14; calcium-binding domain. The region spanning 583-619 (QVDECRSQPCRYGGKCLDLVDKYLCRCPPGTTGVNCE) is the EGF-like 15; calcium-binding domain. The EGF-like 16; calcium-binding domain occupies 621–656 (NIDDCASNPCTFGVCRDGINRYDCVCQPGFTGPLCN). The EGF-like 17; calcium-binding domain maps to 658–694 (EINECASSPCGEGGSCVDGENGFHCLCPPGSLPPLCL). EGF-like domains are found at residues 696–731 (ANHP…PRCS), 735–771 (APDA…HQCE), and 772–809 (VLSP…PRCQ). Positions 811–848 (DVDECAGASPCGPHGTCTNLPGNFRCICHRGYTGPFCD) constitute an EGF-like 21; calcium-binding domain. Residues 850 to 886 (DIDDCDPNPCLHGGSCQDGVGSFSCSCLDGFAGPRCA) enclose the EGF-like 22; calcium-binding domain. In terms of domain architecture, EGF-like 23; calcium-binding spans 888–923 (DVDECLSSPCGPGTCTDHVASFTCACPPGYGGFHCE). 5 EGF-like domains span residues 925–961 (DLPD…THCQ), 963–999 (EADP…SQCQ), 1001–1035 (PVDW…RLCD), 1037–1083 (QSLP…SHCE), and 1085–1121 (EVDP…DSCE). Residues 1123-1159 (NIDECASQPCQNGGSCIDLVARYLCSCPPGTLGVLCE) form the EGF-like 29; calcium-binding domain. The 44-residue stretch at 1161–1204 (NEDDCDLGPSLDSGVQCLHNGTCVDLVGGFRCNCPPGYTGLHCE) folds into the EGF-like 30; calcium-binding domain. Asn-1180 carries an N-linked (GlcNAc...) asparagine glycan. EGF-like domains lie at 1206–1245 (DINE…PRCQ), 1247–1288 (ALSP…LRCE), 1290–1326 (VARS…PSCR), and 1336–1374 (TNAS…PRCE). N-linked (GlcNAc...) asparagine glycosylation occurs at Asn-1337. 12 disulfide bridges follow: Cys-1340–Cys-1351, Cys-1345–Cys-1362, Cys-1364–Cys-1373, Cys-1388–Cys-1411, Cys-1393–Cys-1406, Cys-1402–Cys-1418, Cys-1429–Cys-1452, Cys-1434–Cys-1447, Cys-1443–Cys-1459, Cys-1468–Cys-1494, Cys-1476–Cys-1489, and Cys-1485–Cys-1501. 3 LNR repeats span residues 1388 to 1428 (CPRA…PWRQ), 1429 to 1466 (CEAL…GRDR), and 1468 to 1506 (CNPV…SEVP). The N-linked (GlcNAc...) asparagine glycan is linked to Asn-1439. Residues 1644 to 1664 (LLPLLVAGAVFLLIIFILGVM) traverse the membrane as a helical segment. The Cytoplasmic segment spans residues 1665 to 2318 (VARRKREHST…EVTPKRQVMA (654 aa)). ANK repeat units follow at residues 1839 to 1868 (TGET…DTNA), 1872 to 1902 (SGRT…DLDA), 1906 to 1935 (DGST…DVNA), 1939 to 1968 (LGKS…NKDM), and 1972 to 2001 (KEET…NREI). 2 disordered regions span residues 2025 to 2045 (LDQP…PLLC) and 2058 to 2126 (QSGT…PLEG). Residues 2028 to 2045 (PSGPRSPSGPHGLGPLLC) are compositionally biased toward low complexity. Arg-2174 is subject to Omega-N-methylarginine. Over residues 2184 to 2193 (SFLLPLAPGP) the composition is skewed to low complexity. Residues 2184–2318 (SFLLPLAPGP…EVTPKRQVMA (135 aa)) are disordered. The segment at 2242 to 2261 (HPYLTPSPESPEHWASPSPP) is PEST-like. Residues 2262–2282 (SLSDWSDSTPSPATATNATAS) show a composition bias toward low complexity. Residues 2296 to 2305 (SLPQSQTQLG) are compositionally biased toward polar residues.

This sequence belongs to the NOTCH family. In terms of assembly, interacts with PSMA1. Heterodimer of a C-terminal fragment N(TM) and a N-terminal fragment N(EC) which are probably linked by disulfide bonds. Interacts with MAML1, MAML2 and MAML3 which act as transcriptional coactivators for NOTCH3. Interacts with HIF1AN. In terms of processing, synthesized in the endoplasmic reticulum as an inactive form which is proteolytically cleaved by a furin-like convertase in the trans-Golgi network before it reaches the plasma membrane to yield an active, ligand-accessible form. Cleavage results in a C-terminal fragment N(TM) and a N-terminal fragment N(EC). Following ligand binding, it is cleaved by TNF-alpha converting enzyme (TACE) to yield a membrane-associated intermediate fragment called notch extracellular truncation (NEXT). This fragment is then cleaved by presenilin dependent gamma-secretase to release a notch-derived peptide containing the intracellular domain (NICD) from the membrane. Post-translationally, phosphorylated. Hydroxylated by HIF1AN. Proliferating neuroepithelium.

It is found in the cell membrane. It localises to the nucleus. Its function is as follows. Functions as a receptor for membrane-bound ligands Jagged1, Jagged2 and Delta1 to regulate cell-fate determination. Upon ligand activation through the released notch intracellular domain (NICD) it forms a transcriptional activator complex with RBPJ/RBPSUH and activates genes of the enhancer of split locus. Affects the implementation of differentiation, proliferation and apoptotic programs. May play a role during CNS development. The polypeptide is Neurogenic locus notch homolog protein 3 (Notch3) (Mus musculus (Mouse)).